The sequence spans 405 residues: Deoxyguanosinetriphosphate triphosphohydrolase-like protein (405 aa).

Positions 75 to 219 (RLTHTIEVAQ…AAIADDIAYN (145 aa)) constitute an HD domain.

This sequence belongs to the dGTPase family. Type 2 subfamily.

This is Deoxyguanosinetriphosphate triphosphohydrolase-like protein from Rhizobium etli (strain ATCC 51251 / DSM 11541 / JCM 21823 / NBRC 15573 / CFN 42).